Here is a 432-residue protein sequence, read N- to C-terminus: Alpha-ketoglutarate permease (432 aa).

The Cytoplasmic portion of the chain corresponds to Met-1–Leu-32. Residues Val-33 to Phe-53 traverse the membrane as a helical segment. Over Pro-54–Leu-62 the chain is Periplasmic. The helical transmembrane segment at Leu-63–Phe-83 threads the bilayer. Residues Gly-84–Ser-95 are Cytoplasmic-facing. Residues Met-96–Tyr-116 form a helical membrane-spanning segment. Residues Glu-117–Thr-118 lie on the Periplasmic side of the membrane. Residues Ile-119–Gly-139 traverse the membrane as a helical segment. The Cytoplasmic portion of the chain corresponds to Gly-140–Ala-162. The chain crosses the membrane as a helical span at residues Ser-163 to Leu-183. The Periplasmic portion of the chain corresponds to Gln-184–Arg-193. The chain crosses the membrane as a helical span at residues Glu-194–Leu-214. Residues Arg-215–Arg-243 are Cytoplasmic-facing. The chain crosses the membrane as a helical span at residues Ala-244 to Thr-264. The Periplasmic segment spans residues Tyr-265–Asn-279. The chain crosses the membrane as a helical span at residues Val-280–Gly-300. Residues Ala-301–Arg-309 lie on the Cytoplasmic side of the membrane. Residues Thr-310–Leu-330 form a helical membrane-spanning segment. At Gln-331–Ala-339 the chain is on the periplasmic side. A helical membrane pass occupies residues Phe-340 to Leu-360. Residues Lys-361–Gly-373 are Cytoplasmic-facing. The chain crosses the membrane as a helical span at residues Val-374 to Leu-394. The Periplasmic segment spans residues Ser-395–Glu-402. Residues Thr-403–Leu-423 traverse the membrane as a helical segment. Residues His-424–Leu-432 are Cytoplasmic-facing.

This sequence belongs to the major facilitator superfamily. Metabolite:H+ Symporter (MHS) family (TC 2.A.1.6) family.

Its subcellular location is the cell inner membrane. Its function is as follows. Uptake of alpha-ketoglutarate across the boundary membrane with the concomitant import of a cation (symport system). This Escherichia coli (strain K12) protein is Alpha-ketoglutarate permease (kgtP).